A 530-amino-acid chain; its full sequence is Bifunctional purine biosynthesis protein PurH (530 aa).

In terms of domain architecture, MGS-like spans methionine 1–valine 148.

This sequence belongs to the PurH family.

The enzyme catalyses (6R)-10-formyltetrahydrofolate + 5-amino-1-(5-phospho-beta-D-ribosyl)imidazole-4-carboxamide = 5-formamido-1-(5-phospho-D-ribosyl)imidazole-4-carboxamide + (6S)-5,6,7,8-tetrahydrofolate. It carries out the reaction IMP + H2O = 5-formamido-1-(5-phospho-D-ribosyl)imidazole-4-carboxamide. It participates in purine metabolism; IMP biosynthesis via de novo pathway; 5-formamido-1-(5-phospho-D-ribosyl)imidazole-4-carboxamide from 5-amino-1-(5-phospho-D-ribosyl)imidazole-4-carboxamide (10-formyl THF route): step 1/1. It functions in the pathway purine metabolism; IMP biosynthesis via de novo pathway; IMP from 5-formamido-1-(5-phospho-D-ribosyl)imidazole-4-carboxamide: step 1/1. The protein is Bifunctional purine biosynthesis protein PurH of Psychromonas ingrahamii (strain DSM 17664 / CCUG 51855 / 37).